Reading from the N-terminus, the 161-residue chain is MKGDAKVIEFLNAALRSELTAISQYWVHFRLQEDWGLAKMAKKSREESIEEMGHADKIIARILFLEGHPNLQKLDPLRIGEGPRETLECDLAGEHDALKLYREARDYCAEVGDIVSKNIFESLITDEEGHVDFLETQISLYDRLGPQGFALLNAAPMDAAE.

The region spanning methionine 1–glycine 145 is the Ferritin-like diiron domain. Glutamate 18 and glutamate 51 together coordinate Fe cation. Methionine 52 provides a ligand contact to heme b. Fe cation is bound by residues histidine 54, glutamate 94, glutamate 127, and histidine 130.

It belongs to the bacterioferritin family. As to quaternary structure, homooligomer of 24 subunits, arranged as 12 dimers, that are packed together to form an approximately spherical molecule with a central cavity, in which large amounts of iron can be deposited. Requires heme b as cofactor.

It catalyses the reaction 4 Fe(2+) + O2 + 4 H(+) = 4 Fe(3+) + 2 H2O. It carries out the reaction Fe(2+)(in) = Fe(2+)(out). Its function is as follows. Iron-storage protein, whose ferroxidase center binds Fe(2+), oxidizes it using dioxygen to Fe(3+), and participates in the subsequent Fe(3+) oxide mineral core formation within the central cavity of the BFR protein shell. The polypeptide is Bacterioferritin (bfr) (Rhodobacter capsulatus (Rhodopseudomonas capsulata)).